Here is a 336-residue protein sequence, read N- to C-terminus: tRNA-cytidine(32) 2-sulfurtransferase (336 aa).

Low complexity predominate over residues 11–23; that stretch reads TAAAPAGTGEATP. Residues 11-31 are disordered; the sequence is TAAAPAGTGEATPVHARARSP. Residues 75 to 80 carry the PP-loop motif motif; sequence SGGKDS. The [4Fe-4S] cluster site is built by C150, C153, and C241.

This sequence belongs to the TtcA family. In terms of assembly, homodimer. Requires Mg(2+) as cofactor. [4Fe-4S] cluster serves as cofactor.

It localises to the cytoplasm. The enzyme catalyses cytidine(32) in tRNA + S-sulfanyl-L-cysteinyl-[cysteine desulfurase] + AH2 + ATP = 2-thiocytidine(32) in tRNA + L-cysteinyl-[cysteine desulfurase] + A + AMP + diphosphate + H(+). The protein operates within tRNA modification. Catalyzes the ATP-dependent 2-thiolation of cytidine in position 32 of tRNA, to form 2-thiocytidine (s(2)C32). The sulfur atoms are provided by the cysteine/cysteine desulfurase (IscS) system. This is tRNA-cytidine(32) 2-sulfurtransferase from Paraburkholderia xenovorans (strain LB400).